The sequence spans 171 residues: Dual-action ribosomal maturation protein DarP (171 aa).

Residues 1–30 (MPKRPAENPEQSDDFVSKSQKKREMAERQE) form a disordered region.

Belongs to the DarP family.

It localises to the cytoplasm. In terms of biological role, member of a network of 50S ribosomal subunit biogenesis factors which assembles along the 30S-50S interface, preventing incorrect 23S rRNA structures from forming. Promotes peptidyl transferase center (PTC) maturation. This chain is Dual-action ribosomal maturation protein DarP, found in Idiomarina loihiensis (strain ATCC BAA-735 / DSM 15497 / L2-TR).